A 384-amino-acid polypeptide reads, in one-letter code: 4-coumarate--CoA ligase (384 aa).

The protein belongs to the ATP-dependent AMP-binding enzyme family.

The catalysed reaction is (E)-4-coumarate + ATP + CoA = (E)-4-coumaroyl-CoA + AMP + diphosphate. Converts p-coumaric acid into p-coumaryl CoA. This is necessary for the activation of the photoactive yellow protein (PYP) chromophore. The sequence is that of 4-coumarate--CoA ligase (pcl) from Rhodobacter capsulatus (strain ATCC BAA-309 / NBRC 16581 / SB1003).